We begin with the raw amino-acid sequence, 420 residues long: Putative competence-damage inducible protein (420 aa).

This sequence belongs to the CinA family.

This is Putative competence-damage inducible protein from Lactiplantibacillus plantarum (strain ATCC BAA-793 / NCIMB 8826 / WCFS1) (Lactobacillus plantarum).